The following is a 263-amino-acid chain: Probable septum site-determining protein MinC (263 aa).

The disordered stretch occupies residues 107–159 (LPPSGARERPLDIKDSAPRKPAEEPSPSAGEARPEPAKAEEKPADPVSRPTKV). Composition is skewed to basic and acidic residues over residues 112-129 (ARERPLDIKDSAPRKPAE) and 138-150 (ARPEPAKAEEKPA).

It belongs to the MinC family. Interacts with MinD and FtsZ.

Cell division inhibitor that blocks the formation of polar Z ring septums. Rapidly oscillates between the poles of the cell to destabilize FtsZ filaments that have formed before they mature into polar Z rings. Prevents FtsZ polymerization. The polypeptide is Probable septum site-determining protein MinC (Pseudomonas aeruginosa (strain UCBPP-PA14)).